The sequence spans 435 residues: Keratin, type I cytoskeletal 18 (435 aa).

The interval 2 to 84 (SYRPGSYSVS…SVSGSGLVGN (83 aa)) is head. Residues 85-120 (EKETMIGLNDRLAAYLETVRNLEQANSKLEFQIREA) are coil 1A. Residues 85–396 (EKETMIGLND…RLLDGEDFRL (312 aa)) form the IF rod domain. The segment at 121 to 137 (LEKKGPTTRDLSPFEKT) is linker 1. Residues 138 to 229 (LEDLRKKVYD…QNHNQEVNDL (92 aa)) are coil 1B. Positions 230–253 (RNQIAQSGVQVDVDAPKGQDLAQV) are linker 12. The interval 254–391 (LAEVRAQYES…IATYRRLLDG (138 aa)) is coil 2. Residues 392 to 435 (EDFRLQDALVDQSSTKSIKKVTVTQTLVDGKVVSESTNTKEIGK) form a tail region.

Belongs to the intermediate filament family. In terms of assembly, heterotetramer of two type I and two type II keratins. Keratin-18 associates with keratin-8. In terms of processing, phosphorylated. Post-translationally, proteolytically cleaved by caspases during epithelial cell apoptosis.

When phosphorylated, plays a role in filament reorganization. The chain is Keratin, type I cytoskeletal 18 from Acipenser baerii (Siberian sturgeon).